We begin with the raw amino-acid sequence, 592 residues long: Aspartate--tRNA ligase (592 aa).

E173 is an L-aspartate binding site. Residues 197–200 are aspartate; that stretch reads QLFK. L-aspartate is bound at residue R219. Residues 219–221 and Q228 contribute to the ATP site; that span reads RDE. H448 contacts L-aspartate. An ATP-binding site is contributed by E482. R489 is a binding site for L-aspartate. 534–537 is a binding site for ATP; the sequence is GLDR.

It belongs to the class-II aminoacyl-tRNA synthetase family. Type 1 subfamily. As to quaternary structure, homodimer.

It is found in the cytoplasm. It catalyses the reaction tRNA(Asp) + L-aspartate + ATP = L-aspartyl-tRNA(Asp) + AMP + diphosphate. Its function is as follows. Catalyzes the attachment of L-aspartate to tRNA(Asp) in a two-step reaction: L-aspartate is first activated by ATP to form Asp-AMP and then transferred to the acceptor end of tRNA(Asp). The chain is Aspartate--tRNA ligase from Shewanella baltica (strain OS195).